A 531-amino-acid polypeptide reads, in one-letter code: Apolipoprotein N-acyltransferase (531 aa).

7 consecutive transmembrane segments (helical) span residues 8–28, 34–54, 69–89, 105–125, 136–156, 178–198, and 207–227; these read IILL…LLAV, FGIF…IDGV, PAAI…WWLG, LAVV…VVIA, IAAL…VFTG, VVNL…PALI, and GLAI…YRLA. The CN hydrolase domain maps to 243–493; that stretch reads VQPVIDQAKK…RGVLDTILPG (251 aa). Glu287 (proton acceptor) is an active-site residue. Lys351 is a catalytic residue. Catalysis depends on Cys405, which acts as the Nucleophile. The chain crosses the membrane as a helical span at residues 507–527; sequence IFWLSMAILSIVASFSRFGFN.

It belongs to the CN hydrolase family. Apolipoprotein N-acyltransferase subfamily.

Its subcellular location is the cell inner membrane. It catalyses the reaction N-terminal S-1,2-diacyl-sn-glyceryl-L-cysteinyl-[lipoprotein] + a glycerophospholipid = N-acyl-S-1,2-diacyl-sn-glyceryl-L-cysteinyl-[lipoprotein] + a 2-acyl-sn-glycero-3-phospholipid + H(+). Its pathway is protein modification; lipoprotein biosynthesis (N-acyl transfer). Catalyzes the phospholipid dependent N-acylation of the N-terminal cysteine of apolipoprotein, the last step in lipoprotein maturation. This Sinorhizobium medicae (strain WSM419) (Ensifer medicae) protein is Apolipoprotein N-acyltransferase.